The primary structure comprises 366 residues: tRNA/tmRNA (uracil-C(5))-methyltransferase (366 aa).

The S-adenosyl-L-methionine site is built by Gln-189, Tyr-217, Asn-222, Glu-238, and Asp-298. Residue Cys-323 is the Nucleophile of the active site. Glu-357 (proton acceptor) is an active-site residue.

Belongs to the class I-like SAM-binding methyltransferase superfamily. RNA M5U methyltransferase family. TrmA subfamily.

The catalysed reaction is uridine(54) in tRNA + S-adenosyl-L-methionine = 5-methyluridine(54) in tRNA + S-adenosyl-L-homocysteine + H(+). It catalyses the reaction uridine(341) in tmRNA + S-adenosyl-L-methionine = 5-methyluridine(341) in tmRNA + S-adenosyl-L-homocysteine + H(+). Dual-specificity methyltransferase that catalyzes the formation of 5-methyluridine at position 54 (m5U54) in all tRNAs, and that of position 341 (m5U341) in tmRNA (transfer-mRNA). This chain is tRNA/tmRNA (uracil-C(5))-methyltransferase, found in Shewanella putrefaciens (strain CN-32 / ATCC BAA-453).